Here is a 197-residue protein sequence, read N- to C-terminus: Glycerol-3-phosphate acyltransferase (197 aa).

The next 5 membrane-spanning stretches (helical) occupy residues 1-21 (MNIL…GFLI), 78-98 (LIEV…IWLG), 111-131 (MFLA…LIVL), 136-155 (FVSL…MFFY), and 159-176 (FIHT…LVIW).

It belongs to the PlsY family. Probably interacts with PlsX.

The protein resides in the cell inner membrane. The enzyme catalyses an acyl phosphate + sn-glycerol 3-phosphate = a 1-acyl-sn-glycero-3-phosphate + phosphate. It participates in lipid metabolism; phospholipid metabolism. Its function is as follows. Catalyzes the transfer of an acyl group from acyl-phosphate (acyl-PO(4)) to glycerol-3-phosphate (G3P) to form lysophosphatidic acid (LPA). This enzyme utilizes acyl-phosphate as fatty acyl donor, but not acyl-CoA or acyl-ACP. The chain is Glycerol-3-phosphate acyltransferase from Prochlorococcus marinus (strain MIT 9215).